A 185-amino-acid polypeptide reads, in one-letter code: Ribosome-recycling factor (185 aa).

It belongs to the RRF family.

It localises to the cytoplasm. Responsible for the release of ribosomes from messenger RNA at the termination of protein biosynthesis. May increase the efficiency of translation by recycling ribosomes from one round of translation to another. This is Ribosome-recycling factor from Buchnera aphidicola subsp. Acyrthosiphon pisum (strain Tuc7).